A 264-amino-acid chain; its full sequence is Thymidylate synthase (264 aa).

Residue Arg-21 participates in dUMP binding. His-51 is a binding site for (6R)-5,10-methylene-5,6,7,8-tetrahydrofolate. DUMP is bound at residue 126–127 (RR). Cys-146 serves as the catalytic Nucleophile. Residues 166-169 (RSAD), Asn-177, and 207-209 (HLY) contribute to the dUMP site. Position 169 (Asp-169) interacts with (6R)-5,10-methylene-5,6,7,8-tetrahydrofolate. Ala-263 provides a ligand contact to (6R)-5,10-methylene-5,6,7,8-tetrahydrofolate.

Belongs to the thymidylate synthase family. Bacterial-type ThyA subfamily. Homodimer.

The protein resides in the cytoplasm. It carries out the reaction dUMP + (6R)-5,10-methylene-5,6,7,8-tetrahydrofolate = 7,8-dihydrofolate + dTMP. It functions in the pathway pyrimidine metabolism; dTTP biosynthesis. Catalyzes the reductive methylation of 2'-deoxyuridine-5'-monophosphate (dUMP) to 2'-deoxythymidine-5'-monophosphate (dTMP) while utilizing 5,10-methylenetetrahydrofolate (mTHF) as the methyl donor and reductant in the reaction, yielding dihydrofolate (DHF) as a by-product. This enzymatic reaction provides an intracellular de novo source of dTMP, an essential precursor for DNA biosynthesis. In Bartonella tribocorum (strain CIP 105476 / IBS 506), this protein is Thymidylate synthase.